The sequence spans 340 residues: Ketol-acid reductoisomerase (NADP(+)) (340 aa).

The 180-residue stretch at 3–182 (VTMYYEEDVE…GCARVGIIET (180 aa)) folds into the KARI N-terminal Rossmann domain. NADP(+) is bound by residues 26–29 (YGSQ), Arg-49, Ser-53, and 83–86 (DELQ). Residue His-108 is part of the active site. NADP(+) is bound at residue Gly-134. In terms of domain architecture, KARI C-terminal knotted spans 183-328 (TFKEETEEDL…AELRKAMPFT (146 aa)). Asp-191, Glu-195, Glu-227, and Glu-231 together coordinate Mg(2+). Ser-252 is a substrate binding site.

The protein belongs to the ketol-acid reductoisomerase family. It depends on Mg(2+) as a cofactor.

The catalysed reaction is (2R)-2,3-dihydroxy-3-methylbutanoate + NADP(+) = (2S)-2-acetolactate + NADPH + H(+). It catalyses the reaction (2R,3R)-2,3-dihydroxy-3-methylpentanoate + NADP(+) = (S)-2-ethyl-2-hydroxy-3-oxobutanoate + NADPH + H(+). It functions in the pathway amino-acid biosynthesis; L-isoleucine biosynthesis; L-isoleucine from 2-oxobutanoate: step 2/4. Its pathway is amino-acid biosynthesis; L-valine biosynthesis; L-valine from pyruvate: step 2/4. In terms of biological role, involved in the biosynthesis of branched-chain amino acids (BCAA). Catalyzes an alkyl-migration followed by a ketol-acid reduction of (S)-2-acetolactate (S2AL) to yield (R)-2,3-dihydroxy-isovalerate. In the isomerase reaction, S2AL is rearranged via a Mg-dependent methyl migration to produce 3-hydroxy-3-methyl-2-ketobutyrate (HMKB). In the reductase reaction, this 2-ketoacid undergoes a metal-dependent reduction by NADPH to yield (R)-2,3-dihydroxy-isovalerate. This chain is Ketol-acid reductoisomerase (NADP(+)), found in Lactococcus lactis subsp. cremoris (strain MG1363).